Reading from the N-terminus, the 1043-residue chain is Polycomb protein Pcl (1043 aa).

Disordered stretches follow at residues 1 to 34 (MMNN…SAPP), 271 to 302 (PDST…PLLA), 317 to 346 (FKTV…AAPS), and 395 to 422 (KLRK…NTSP). Positions 25-34 (PSTAVPSAPP) are enriched in low complexity. Residues 324–344 (PPTPPTPPSPPPPPPAPPVAA) show a composition bias toward pro residues. Residues 349–404 (VTYALQEDVFIKCNDGRFYLGTIIDQTSDQYLIRFDDQSEQWCEPDKLRKLGGGSS) enclose the Tudor domain. Over residues 399–412 (LGGGSSITAGGGGA) the composition is skewed to gly residues. 2 consecutive PHD-type zinc fingers follow at residues 424–472 (GPMC…CAKP) and 512–560 (QIYC…VFCC). Residues 737 to 757 (AKKQAAQKADKHDELPLKPDL) are compositionally biased toward basic and acidic residues. 2 disordered regions span residues 737–819 (AKKQ…TSSL) and 931–985 (AKDL…PGHS). Positions 783–792 (SRKRKAFRLS) are enriched in basic residues. Residues 793-804 (KRYDNSRNHCDL) are compositionally biased toward basic and acidic residues. Phosphoserine is present on residues serine 805 and serine 806. The segment covering 807-819 (DENSSSSRGTSSL) has biased composition (low complexity). The span at 945 to 954 (THGRLLRQRP) shows a compositional bias: basic residues. Low complexity predominate over residues 955-977 (QKQSPSQSRRNSTSSTATSSSSN).

It belongs to the Polycomblike family. Component of a form of the Esc/E(z) complex present specifically during early embryogenesis which is composed of Caf1-55, esc, E(z), Su(z)12, Pcl and HDAC1/Rpd3. This complex is distinct from the PRC1 complex, which contains many other PcG proteins like Pc, Ph, Psc, Su(z)2. The two complexes however cooperate and interact together during the first 3 hours of development to establish PcG silencing. Interacts with corto in vitro.

It is found in the nucleus. Its subcellular location is the chromosome. Its function is as follows. Polycomb group (PcG) protein. While PcG proteins are generally required to maintain the transcriptionally repressive state of homeotic genes throughout development, this protein is specifically required during the first 6 hours of embryogenesis to establish the repressed state. Component of the Esc/E(z) complex, which methylates 'Lys-9' and 'Lys-27' residues of histone H3, leading to transcriptional repression of the affected target gene. The Esc/E(z) complex is necessary but not sufficient for the repression of homeotic target genes, suggesting that the recruitment of the distinct PRC1 complex is also required. Required for the correct spatial expression of the homeotic genes of the Antennapedia and Bithorax complexes. The sequence is that of Polycomb protein Pcl (Pcl) from Drosophila melanogaster (Fruit fly).